We begin with the raw amino-acid sequence, 236 residues long: Purine nucleoside phosphorylase DeoD-type (236 aa).

A purine D-ribonucleoside is bound at residue His5. Residues Gly21, Arg25, Arg44, and 88–91 (RIGS) contribute to the phosphate site. A purine D-ribonucleoside-binding positions include 180–182 (EME) and 204–205 (SD). The active-site Proton donor is the Asp205.

The protein belongs to the PNP/UDP phosphorylase family. As to quaternary structure, homohexamer; trimer of homodimers.

It catalyses the reaction a purine D-ribonucleoside + phosphate = a purine nucleobase + alpha-D-ribose 1-phosphate. The catalysed reaction is a purine 2'-deoxy-D-ribonucleoside + phosphate = a purine nucleobase + 2-deoxy-alpha-D-ribose 1-phosphate. Functionally, catalyzes the reversible phosphorolytic breakdown of the N-glycosidic bond in the beta-(deoxy)ribonucleoside molecules, with the formation of the corresponding free purine bases and pentose-1-phosphate. This is Purine nucleoside phosphorylase DeoD-type from Chromobacterium violaceum (strain ATCC 12472 / DSM 30191 / JCM 1249 / CCUG 213 / NBRC 12614 / NCIMB 9131 / NCTC 9757 / MK).